A 184-amino-acid polypeptide reads, in one-letter code: Photosystem I assembly protein Ycf4 (184 aa).

2 consecutive transmembrane segments (helical) span residues 22–42 and 57–77; these read FCWA…GTSS and ILFF…LFIS.

This sequence belongs to the Ycf4 family.

The protein localises to the plastid. The protein resides in the chloroplast thylakoid membrane. Seems to be required for the assembly of the photosystem I complex. This is Photosystem I assembly protein Ycf4 from Liriodendron tulipifera (Tuliptree).